The following is a 21-amino-acid chain: Peptide PGLa-B2 (21 aa).

Position 21 is a leucine amide (leucine 21).

Expressed by the skin glands.

Its subcellular location is the secreted. Has antimicrobial activity against Gram-negative bacterium E.coli ATCC 25922 (MIC=25 uM), Gram-positive bacterium S.auerus ATCC 25923 (MIC=50 uM) and against fungus C.albicans ATCC 90028 (MIC=25 uM). Has some hemolytic activity against human erythrocytes at high concentration. The chain is Peptide PGLa-B2 from Xenopus borealis (Kenyan clawed frog).